A 76-amino-acid polypeptide reads, in one-letter code: MATWIWILIALLCLVAGVALGFYIARRYMMNYLEQNPPINEDMIKTLMMQMGQKPSQKKVNQVMRSMSGSMKSPKK.

Residues 4–24 form a helical membrane-spanning segment; the sequence is WIWILIALLCLVAGVALGFYI. The tract at residues 54-76 is disordered; the sequence is KPSQKKVNQVMRSMSGSMKSPKK.

This sequence belongs to the UPF0154 family.

Its subcellular location is the cell membrane. The polypeptide is UPF0154 protein Exig_1099 (Exiguobacterium sibiricum (strain DSM 17290 / CCUG 55495 / CIP 109462 / JCM 13490 / 255-15)).